A 302-amino-acid chain; its full sequence is uncharacterized protein (302 aa).

The active site involves glutamate 48.

It belongs to the PhzF family.

This is an uncharacterized protein from Clostridium acetobutylicum (strain ATCC 824 / DSM 792 / JCM 1419 / IAM 19013 / LMG 5710 / NBRC 13948 / NRRL B-527 / VKM B-1787 / 2291 / W).